A 222-amino-acid polypeptide reads, in one-letter code: Type II restriction enzyme AbrI (222 aa).

2 disordered regions span residues 21-45 and 161-222; these read GNRE…RRDR and NQRR…SPRI. The span at 22–42 shows a compositional bias: basic and acidic residues; the sequence is NREKARQKQQESGKPDQGERR. The segment covering 188-202 has biased composition (low complexity); sequence SSASGSSRSSFTPRP.

The protein belongs to the XhoI type II restriction endonuclease family.

It catalyses the reaction Endonucleolytic cleavage of DNA to give specific double-stranded fragments with terminal 5'-phosphates.. A P subtype restriction enzyme that recognizes the double-stranded sequence 5'-CTCGAG-3' and cleaves after C-1. The chain is Type II restriction enzyme AbrI (abrIR) from Azospirillum brasilense.